The primary structure comprises 131 residues: Thioredoxin H4-1 (131 aa).

A Thioredoxin domain is found at 3–129 (SCVGKERSDE…LEKKVAALAD (127 aa)). Residues cysteine 55 and cysteine 58 each act as nucleophile in the active site. Cysteine 55 and cysteine 58 are disulfide-bonded.

The protein belongs to the thioredoxin family. Plant H-type subfamily.

Its subcellular location is the cytoplasm. Functionally, probable thiol-disulfide oxidoreductase that may be involved in the redox regulation of a number of cytosolic enzymes. This is Thioredoxin H4-1 from Oryza sativa subsp. japonica (Rice).